The chain runs to 235 residues: Small ribosomal subunit protein uS2 (235 aa).

The protein belongs to the universal ribosomal protein uS2 family.

The chain is Small ribosomal subunit protein uS2 from Geobacillus sp. (strain WCH70).